The sequence spans 31 residues: Bacteriocin leucocin-B (31 aa).

Its subcellular location is the secreted. Inhibits a wide spectrum of lactic acid bacteria. This Leuconostoc mesenteroides protein is Bacteriocin leucocin-B.